The primary structure comprises 272 residues: Dermonecrotic toxin StSicTox-betaIC1 (272 aa).

Residue His5 is part of the active site. Mg(2+) is bound by residues Glu25 and Asp27. His41 serves as the catalytic Nucleophile. 2 disulfide bridges follow: Cys45–Cys51 and Cys47–Cys191. A Mg(2+)-binding site is contributed by Asp85.

The protein belongs to the arthropod phospholipase D family. Class II subfamily. Class IIb sub-subfamily. It depends on Mg(2+) as a cofactor. Expressed by the venom gland.

The protein resides in the secreted. It catalyses the reaction an N-(acyl)-sphingosylphosphocholine = an N-(acyl)-sphingosyl-1,3-cyclic phosphate + choline. The catalysed reaction is N-hexanoyl-sphing-4-enine-1-phosphocholine = N-(hexanoyl)-sphing-4-enine-1,3-cyclic phosphate + choline. It carries out the reaction an N-(acyl)-sphingosylphosphoethanolamine = an N-(acyl)-sphingosyl-1,3-cyclic phosphate + ethanolamine. The enzyme catalyses N-dodecanoyl-heptadecasphing-4-enine-1-phosphoethanolamine = N-dodecanoyl-heptadecasphing-4-enine-1,3-cyclic phosphate + ethanolamine. It catalyses the reaction a 1-acyl-sn-glycero-3-phosphoethanolamine = a 1-acyl-sn-glycero-2,3-cyclic phosphate + ethanolamine. The catalysed reaction is 1-tetradecanoyl-sn-glycero-3-phosphoethanolamine = 1-tetradecanoyl-sn-glycero-2,3-cyclic phosphate + ethanolamine. Functionally, dermonecrotic toxins cleave the phosphodiester linkage between the phosphate and headgroup of certain phospholipids (sphingolipid and lysolipid substrates), forming an alcohol (often choline) and a cyclic phosphate. This toxin acts on lysophosphatidylethanolamine (LPE) and ceramide phosphoethanolamine (CPE) with high activity. This toxin acts on sphingomyelin (SM) with very low activity and is not active on lysophosphatidylserine (LPS), lysophosphatidylcholine (LPC) and lysophosphatidylglycerol (LPG). It acts by transphosphatidylation, releasing exclusively cyclic phosphate as second products. It is not surprising that spider toxins have affinity for ethanolamine-containing sphingolipids since they are common in insect prey. Induces dermonecrosis, hemolysis, increased vascular permeability, edema, inflammatory response, and platelet aggregation. This chain is Dermonecrotic toxin StSicTox-betaIC1, found in Sicarius terrosus (Cave spider).